Reading from the N-terminus, the 283-residue chain is Orotidine 5'-phosphate decarboxylase (283 aa).

Residues aspartate 40, 62–64, 93–102, tyrosine 220, and arginine 239 each bind substrate; these read KTH and DRKFADIGNT. The active-site Proton donor is lysine 95.

It belongs to the OMP decarboxylase family.

It catalyses the reaction orotidine 5'-phosphate + H(+) = UMP + CO2. It participates in pyrimidine metabolism; UMP biosynthesis via de novo pathway; UMP from orotate: step 2/2. The polypeptide is Orotidine 5'-phosphate decarboxylase (PYR6) (Mycosarcoma maydis (Corn smut fungus)).